Consider the following 69-residue polypeptide: Purkinje cell protein 4-like protein 1 (69 aa).

Positions 1–15 are enriched in polar residues; that stretch reads MSELNTKTSPATNQA. The tract at residues 1–47 is disordered; it reads MSELNTKTSPATNQAPGPEEKGKAGSAKKTEDEEEEIDIDLTAPETE. Thr8 is modified (phosphothreonine). Positions 18–31 are enriched in basic and acidic residues; sequence PEEKGKAGSAKKTE. Residues 46-69 enclose the IQ domain; the sequence is TEKAALAIQGKFRRFQKRKKDPSS.

Belongs to the PCP4 family.

The chain is Purkinje cell protein 4-like protein 1 (PCP4L1) from Bos taurus (Bovine).